We begin with the raw amino-acid sequence, 415 residues long: Vascular endothelial growth factor C (415 aa).

An N-terminal signal peptide occupies residues 1–31 (MHLLCFLSLACSLLAAALIPSPREAPATVAA). The propeptide occupies 32–107 (FESGLGFSEA…RTGDSVKFAA (76 aa)). Disulfide bonds link Cys-127-Cys-169, Cys-158-Cys-205, and Cys-162-Cys-207. N-linked (GlcNAc...) asparagine glycans are attached at residues Asn-171, Asn-201, and Asn-236. The propeptide occupies 224–415 (SLPATLPQCQ…PSYWKRPHLN (192 aa)). A run of 4 repeats spans residues 276–291 (CGPNKELDEDTCQCVC), 300–315 (CGPHKELDRDSCQCVC), 324–339 (CGANREFDENTCQCVC), and 343–358 (CPRNQPLNPGKCACEC). Positions 276–358 (CGPNKELDED…LNPGKCACEC (83 aa)) are 4 X 16 AA repeats of C-X(10)-C-X-C-X(1,3)-C.

This sequence belongs to the PDGF/VEGF growth factor family. As to quaternary structure, homodimer; non-covalent and antiparallel. Interacts with FLT4/VEGFR3; the interaction is required for FLT4/VEGFR3 homodimarization and activation. Undergoes a complex proteolytic maturation which generates a variety of processed secreted forms with increased activity toward VEGFR-3, but only the fully processed form could activate VEGFR-2. VEGF-C first form an antiparallel homodimer linked by disulfide bonds. Before secretion, a cleavage occurs between Arg-223 and Ser-224 producing a heterotetramer. The next extracellular step of the processing removes the N-terminal propeptide. Finally the mature VEGF-C is composed mostly of two VEGF homology domains (VHDs) bound by non-covalent interactions. In terms of tissue distribution, expressed in adult heart, brain, spleen, lung, liver, skeletal muscle, kidney, testis and intestine with higher levels in heart, brain and kidney. Isoform 4 levels are very low. Isoform 3 is mostly expressed in liver and has reduced expression level in other tissues. Isoform 2 is mostly expressed in brain and kidney, although a lower level expression in other tissues is also detectable.

It localises to the secreted. In terms of biological role, growth factor active in angiogenesis, and endothelial cell growth, stimulating their proliferation and migration and also has effects on the permeability of blood vessels. May function in angiogenesis of the venous and lymphatic vascular systems during embryogenesis, and also in the maintenance of differentiated lymphatic endothelium in adults. Binds and activates KDR/VEGFR2 and FLT4/VEGFR3 receptors. This Mus musculus (Mouse) protein is Vascular endothelial growth factor C (Vegfc).